We begin with the raw amino-acid sequence, 275 residues long: Large ribosomal subunit protein uL2 (275 aa).

The tract at residues 221-275 (RGTAMNPIDHPHGGGEGKNFGKHPVSPWGVQSKGKKTRKNKRTEKYILYNRKYKK) is disordered. A compositionally biased stretch (basic residues) spans 253-262 (KGKKTRKNKR).

The protein belongs to the universal ribosomal protein uL2 family. In terms of assembly, part of the 50S ribosomal subunit. Forms a bridge to the 30S subunit in the 70S ribosome.

Its function is as follows. One of the primary rRNA binding proteins. Required for association of the 30S and 50S subunits to form the 70S ribosome, for tRNA binding and peptide bond formation. It has been suggested to have peptidyltransferase activity; this is somewhat controversial. Makes several contacts with the 16S rRNA in the 70S ribosome. This chain is Large ribosomal subunit protein uL2, found in Wigglesworthia glossinidia brevipalpis.